The chain runs to 350 residues: Streptomycin biosynthesis operon possible regulatory protein (350 aa).

A compositionally biased stretch (polar residues) spans 1–10 (MEHISGNSPE). 3 disordered regions span residues 1 to 20 (MEHISGNSPEQVRERSAAVT), 168 to 189 (AGVPQSNVRIGRDGRARPLDPT), and 211 to 258 (AAQA…SRAD). Basic and acidic residues-rich tracts occupy residues 177-189 (IGRDGRARPLDPT) and 223-242 (DVRKRLSRGESPLPERDRQQ).

This Streptomyces griseus protein is Streptomycin biosynthesis operon possible regulatory protein (strR).